The primary structure comprises 358 residues: Tetraacyldisaccharide 4'-kinase (358 aa).

71-78 is an ATP binding site; the sequence is IAGGAGKT.

The protein belongs to the LpxK family.

It carries out the reaction a lipid A disaccharide + ATP = a lipid IVA + ADP + H(+). The protein operates within glycolipid biosynthesis; lipid IV(A) biosynthesis; lipid IV(A) from (3R)-3-hydroxytetradecanoyl-[acyl-carrier-protein] and UDP-N-acetyl-alpha-D-glucosamine: step 6/6. Transfers the gamma-phosphate of ATP to the 4'-position of a tetraacyldisaccharide 1-phosphate intermediate (termed DS-1-P) to form tetraacyldisaccharide 1,4'-bis-phosphate (lipid IVA). The sequence is that of Tetraacyldisaccharide 4'-kinase from Methylibium petroleiphilum (strain ATCC BAA-1232 / LMG 22953 / PM1).